We begin with the raw amino-acid sequence, 467 residues long: Colanic acid biosynthesis protein WcaM (467 aa).

It functions in the pathway slime biogenesis; slime polysaccharide biosynthesis. This is Colanic acid biosynthesis protein WcaM (wcaM) from Salmonella typhimurium (strain LT2 / SGSC1412 / ATCC 700720).